A 151-amino-acid polypeptide reads, in one-letter code: uncharacterized protein (151 aa).

The next 4 helical transmembrane spans lie at glycine 8–glutamate 28, tryptophan 60–threonine 80, phenylalanine 82–serine 102, and leucine 113–serine 133.

The protein belongs to the DoxX family.

The protein resides in the cell membrane. This is an uncharacterized protein from Haemophilus influenzae (strain ATCC 51907 / DSM 11121 / KW20 / Rd).